A 341-amino-acid polypeptide reads, in one-letter code: Phosphate acyltransferase (341 aa).

This sequence belongs to the PlsX family. As to quaternary structure, homodimer. Probably interacts with PlsY.

The protein resides in the cytoplasm. It catalyses the reaction a fatty acyl-[ACP] + phosphate = an acyl phosphate + holo-[ACP]. It participates in lipid metabolism; phospholipid metabolism. Its function is as follows. Catalyzes the reversible formation of acyl-phosphate (acyl-PO(4)) from acyl-[acyl-carrier-protein] (acyl-ACP). This enzyme utilizes acyl-ACP as fatty acyl donor, but not acyl-CoA. The polypeptide is Phosphate acyltransferase (Aliivibrio fischeri (strain ATCC 700601 / ES114) (Vibrio fischeri)).